A 145-amino-acid polypeptide reads, in one-letter code: Protein H2A.5 (145 aa).

Residues 118-145 are disordered; sequence SPAAAEKEAKSQKAAAKSPKKKTAATKE. The SPKK motif motif lies at 135 to 138; it reads SPKK. Basic residues predominate over residues 135–145; sequence SPKKKTAATKE.

This sequence belongs to the histone H2A family. As to quaternary structure, the nucleosome is a histone octamer containing two molecules each of H2A, H2B, H3 and H4 assembled in one H3-H4 heterotetramer and two H2A-H2B heterodimers. The octamer wraps approximately 147 bp of DNA. In terms of tissue distribution, abundant in meristematic tissues.

Its subcellular location is the nucleus. The protein resides in the chromosome. Its function is as follows. Core component of nucleosome. Nucleosomes wrap and compact DNA into chromatin, limiting DNA accessibility to the cellular machineries which require DNA as a template. Histones thereby play a central role in transcription regulation, DNA repair, DNA replication and chromosomal stability. DNA accessibility is regulated via a complex set of post-translational modifications of histones, also called histone code, and nucleosome remodeling. The chain is Protein H2A.5 (H2A-2) from Triticum aestivum (Wheat).